The sequence spans 22 residues: Probable ATP-dependent Clp protease proteolytic subunit (22 aa).

The protein belongs to the peptidase S14 family. Component of the chloroplastic Clp protease core complex.

The catalysed reaction is Hydrolysis of proteins to small peptides in the presence of ATP and magnesium. alpha-casein is the usual test substrate. In the absence of ATP, only oligopeptides shorter than five residues are hydrolyzed (such as succinyl-Leu-Tyr-|-NHMec, and Leu-Tyr-Leu-|-Tyr-Trp, in which cleavage of the -Tyr-|-Leu- and -Tyr-|-Trp bonds also occurs).. Functionally, cleaves peptides in various proteins in a process that requires ATP hydrolysis. Has a chymotrypsin-like activity. Plays a major role in the degradation of misfolded proteins. The sequence is that of Probable ATP-dependent Clp protease proteolytic subunit from Populus euphratica (Euphrates poplar).